The sequence spans 455 residues: Phosphomethylpyrimidine synthase (455 aa).

Residues Asn80, Met109, Tyr139, His175, Ser195–Gly197, Asp236–Arg239, and Glu275 each bind substrate. His279 contributes to the Zn(2+) binding site. Tyr302 is a substrate binding site. His343 lines the Zn(2+) pocket. [4Fe-4S] cluster contacts are provided by Cys423, Cys426, and Cys431.

It belongs to the ThiC family. [4Fe-4S] cluster is required as a cofactor.

The enzyme catalyses 5-amino-1-(5-phospho-beta-D-ribosyl)imidazole + S-adenosyl-L-methionine = 4-amino-2-methyl-5-(phosphooxymethyl)pyrimidine + CO + 5'-deoxyadenosine + formate + L-methionine + 3 H(+). The protein operates within cofactor biosynthesis; thiamine diphosphate biosynthesis. Catalyzes the synthesis of the hydroxymethylpyrimidine phosphate (HMP-P) moiety of thiamine from aminoimidazole ribotide (AIR) in a radical S-adenosyl-L-methionine (SAM)-dependent reaction. In Synechococcus sp. (strain JA-2-3B'a(2-13)) (Cyanobacteria bacterium Yellowstone B-Prime), this protein is Phosphomethylpyrimidine synthase.